The chain runs to 856 residues: Leucine--tRNA ligase (856 aa).

Positions Pro-53–His-63 match the 'HIGH' region motif. Residues Lys-622–Ser-626 carry the 'KMSKS' region motif. Position 625 (Lys-625) interacts with ATP.

The protein belongs to the class-I aminoacyl-tRNA synthetase family.

The protein resides in the cytoplasm. It catalyses the reaction tRNA(Leu) + L-leucine + ATP = L-leucyl-tRNA(Leu) + AMP + diphosphate. The chain is Leucine--tRNA ligase from Prochlorococcus marinus (strain MIT 9312).